Reading from the N-terminus, the 351-residue chain is Uroporphyrinogen decarboxylase (351 aa).

Substrate is bound by residues 25–29, D74, Y151, S206, and H325; that span reads RQAGR.

This sequence belongs to the uroporphyrinogen decarboxylase family. As to quaternary structure, homodimer.

It localises to the cytoplasm. It carries out the reaction uroporphyrinogen III + 4 H(+) = coproporphyrinogen III + 4 CO2. It functions in the pathway porphyrin-containing compound metabolism; protoporphyrin-IX biosynthesis; coproporphyrinogen-III from 5-aminolevulinate: step 4/4. Its function is as follows. Catalyzes the decarboxylation of four acetate groups of uroporphyrinogen-III to yield coproporphyrinogen-III. The chain is Uroporphyrinogen decarboxylase from Chlorobium phaeobacteroides (strain BS1).